Here is a 372-residue protein sequence, read N- to C-terminus: tRNA-specific 2-thiouridylase MnmA (372 aa).

ATP is bound by residues 11–18 (GLSGGVDS) and methionine 36. Residues 106-108 (NPD) are interaction with target base in tRNA. Cysteine 111 serves as the catalytic Nucleophile. A disulfide bond links cysteine 111 and cysteine 204. Glycine 136 provides a ligand contact to ATP. The interaction with tRNA stretch occupies residues 154–156 (KDQ). Cysteine 204 serves as the catalytic Cysteine persulfide intermediate. The segment at 311–312 (RY) is interaction with tRNA.

This sequence belongs to the MnmA/TRMU family.

It localises to the cytoplasm. It catalyses the reaction S-sulfanyl-L-cysteinyl-[protein] + uridine(34) in tRNA + AH2 + ATP = 2-thiouridine(34) in tRNA + L-cysteinyl-[protein] + A + AMP + diphosphate + H(+). Functionally, catalyzes the 2-thiolation of uridine at the wobble position (U34) of tRNA, leading to the formation of s(2)U34. The protein is tRNA-specific 2-thiouridylase MnmA of Mycoplasmopsis synoviae (strain 53) (Mycoplasma synoviae).